A 221-amino-acid chain; its full sequence is Veficolin-1 (221 aa).

The N-terminal stretch at 1–25 is a signal peptide; the sequence is MTAWLDFPLALSPLVVVSMKGGSFG. Positions 50-104 constitute a Collagen-like domain; sequence QGQAGIPGIPGVPGTNGLPGAKGDLGPQGPPGERGSTGIPGKAGPKGDKGDQGEA. The tract at residues 54 to 104 is disordered; that stretch reads GIPGIPGVPGTNGLPGAKGDLGPQGPPGERGSTGIPGKAGPKGDKGDQGEA. Residues 111–221 enclose the Fibrinogen C-terminal domain; sequence QQQEAGAKDC…DFNNSKTFAK (111 aa). A disulfide bridge connects residues Cys-120 and Cys-148.

Belongs to the ficolin lectin family. Veficolin subfamily. As to expression, expressed by the mandibular venom duct.

It is found in the secreted. Initiates complement activation and/or interferes in platelet aggregation and/or blood coagulation. The polypeptide is Veficolin-1 (Varanus komodoensis (Komodo dragon)).